Consider the following 2171-residue polypeptide: DExH-box ATP-dependent RNA helicase DExH12 (2171 aa).

Disordered regions lie at residues 24–80 (SLVL…KERD), 218–267 (EENE…NEGT), and 383–426 (TAKE…ESGW). Basic and acidic residues-rich tracts occupy residues 31 to 40 (NRPRDTHEPT) and 50 to 80 (IDPR…KERD). A compositionally biased stretch (acidic residues) spans 218–242 (EENEEDDEESDPDMVEEDDDEEDDE). The segment covering 383–423 (TAKEREENLQKSINEEARRLKDETGGDGGRGRRDVADRDSE) has biased composition (basic and acidic residues). In terms of domain architecture, Helicase ATP-binding 1 spans 514–697 (DTALFKAENI…FLRVDLKKGL (184 aa)). Residue 527–534 (APTGAGKT) participates in ATP binding. The short motif at 639-642 (DEIH) is the DEIH box element. In terms of domain architecture, Helicase C-terminal 1 spans 731 to 941 (LCYQKVLAGA…GTVQNAREAC (211 aa)). One can recognise an SEC63 1 domain in the interval 1006 to 1308 (TDLGRIASYY…WLGSETVLPV (303 aa)). A Helicase ATP-binding 2 domain is found at 1360 to 1537 (TVLYNTNDNV…WIGASSHGLF (178 aa)). 1373-1380 (APTGSGKT) contributes to the ATP binding site. A DELH box motif is present at residues 1479-1482 (DELH). Positions 1574–1779 (AIVQHAKNKK…GVIENKQDAV (206 aa)) constitute a Helicase C-terminal 2 domain. The SEC63 2 domain occupies 1839 to 2157 (PLNLGMIASY…LGCDQEYSFS (319 aa)).

This sequence belongs to the DExH box helicase family. As to quaternary structure, interacts with CLO.

The protein localises to the nucleus. The enzyme catalyses ATP + H2O = ADP + phosphate + H(+). In terms of biological role, RNA helicase that plays an essential role in pre-mRNA splicing as component of the U5 snRNP and U4/U6-U5 tri-snRNP complexes. Involved in spliceosome assembly, activation and disassembly. The protein is DExH-box ATP-dependent RNA helicase DExH12 of Arabidopsis thaliana (Mouse-ear cress).